A 794-amino-acid chain; its full sequence is Signal transducer and activator of transcription 5A (794 aa).

Tyr-90 carries the post-translational modification Phosphotyrosine. Ser-129 is modified (phosphoserine). An SH2 domain is found at 589–686 (WNDGAILGFV…EVFSKYYTPV (98 aa)). Position 682 is a phosphotyrosine (Tyr-682). Tyr-694 bears the Phosphotyrosine; by JAK2 mark. The tract at residues 765–794 (EELLRRPNGQSGPLSPPPAGLFTPARGSLS) is disordered.

This sequence belongs to the transcription factor STAT family. As to quaternary structure, forms a homodimer or a heterodimer with a related family member. Binds NR3C1. Interacts with NCOA1 and SOCS7. Interacts with ERBB4. Interacts with EBF4. Interacts with CD69. ISGylated. Post-translationally, tyrosine phosphorylated in response to KITLG/SCF, IL2, IL3, IL7, IL15, CSF2/GMCSF, GH1, PRL, EPO and THPO. Activated KIT promotes phosphorylation on tyrosine residues and subsequent translocation to the nucleus. Tyrosine phosphorylated in response to constitutively activated FGFR1, FGFR2, FGFR3 and FGFR4. Tyrosine phosphorylation is required for DNA-binding activity and dimerization. Serine phosphorylation is also required for maximal transcriptional activity. Tyrosine phosphorylated in response to signaling via activated FLT3; wild-type FLT3 results in much weaker phosphorylation than constitutively activated mutant FLT3. Alternatively, can be phosphorylated by JAK2 at Tyr-694. Found in mammary gland and, in lesser extent, in ovary, thymus, spleen, kidney, lung, muscle and adrenal gland.

Its subcellular location is the cytoplasm. It localises to the nucleus. Its function is as follows. Carries out a dual function: signal transduction and activation of transcription. Mediates cellular responses to the cytokine KITLG/SCF and other growth factors. May mediate cellular responses to activated FGFR1, FGFR2, FGFR3 and FGFR4. Binds to the GAS element and activates PRL-induced transcription. Regulates the expression of milk proteins during lactation. In Ovis aries (Sheep), this protein is Signal transducer and activator of transcription 5A (STAT5A).